The sequence spans 63 residues: Small ribosomal subunit protein eS17 (63 aa).

This sequence belongs to the eukaryotic ribosomal protein eS17 family.

The sequence is that of Small ribosomal subunit protein eS17 from Methanococcus aeolicus (strain ATCC BAA-1280 / DSM 17508 / OCM 812 / Nankai-3).